A 152-amino-acid chain; its full sequence is UPF0225 protein YchJ (152 aa).

The protein belongs to the UPF0225 family.

This Escherichia coli O17:K52:H18 (strain UMN026 / ExPEC) protein is UPF0225 protein YchJ.